Consider the following 435-residue polypeptide: Xylose isomerase (435 aa).

Mg(2+)-binding residues include aspartate 306 and aspartate 308.

It belongs to the xylose isomerase family. Homotetramer. The cofactor is Mg(2+).

It localises to the cytoplasm. The catalysed reaction is alpha-D-xylose = alpha-D-xylulofuranose. This is Xylose isomerase from Brucella melitensis biotype 2 (strain ATCC 23457).